We begin with the raw amino-acid sequence, 496 residues long: Genome polyprotein (496 aa).

Over 1-447 (SRCTHLENRD…HTVLGGAFNS (447 aa)) the chain is Extracellular. Intrachain disulfides connect C3-C30, C60-C116, C60-C121, C74-C105, C92-C116, and C92-C121. Residues 98–111 (DRGWGNHCGLFGKG) are fusion peptide. N154 carries N-linked (GlcNAc...) asparagine; by host glycosylation. 2 disulfides stabilise this stretch: C186–C290 and C307–C338. The chain crosses the membrane as a helical span at residues 448-468 (IFGGVGFLPKLLMGVALAWLG). Topologically, residues 469–479 (LNTRNPTMSMS) are cytoplasmic. The helical transmembrane segment at 480 to 496 (FLLAGGLVLAMTLGVGA) threads the bilayer.

In terms of assembly, homodimer; in the endoplasmic reticulum and Golgi. Post-translationally, N-glycosylated.

Its subcellular location is the virion membrane. The protein localises to the host endoplasmic reticulum membrane. Binds to host cell surface receptor and mediates fusion between viral and cellular membranes. Envelope protein is synthesized in the endoplasmic reticulum in the form of heterodimer with protein prM. They play a role in virion budding in the ER, and the newly formed immature particle is covered with 60 spikes composed of heterodimer between precursor prM and envelope protein E. The virion is transported to the Golgi apparatus where the low pH causes dissociation of PrM-E heterodimers and formation of E homodimers. prM-E cleavage is ineficient, and many virions are only partially matured. These uncleaved prM would play a role in immune evasion. The protein is Genome polyprotein of Louping ill virus (strain Negishi 3248/49/P10) (Li).